Reading from the N-terminus, the 450-residue chain is Phosphoglucosamine mutase (450 aa).

Serine 102 (phosphoserine intermediate) is an active-site residue. Serine 102, aspartate 243, aspartate 245, and aspartate 247 together coordinate Mg(2+). At serine 102 the chain carries Phosphoserine.

This sequence belongs to the phosphohexose mutase family. Mg(2+) serves as cofactor. In terms of processing, activated by phosphorylation.

The catalysed reaction is alpha-D-glucosamine 1-phosphate = D-glucosamine 6-phosphate. Functionally, catalyzes the conversion of glucosamine-6-phosphate to glucosamine-1-phosphate. This Allorhizobium ampelinum (strain ATCC BAA-846 / DSM 112012 / S4) (Agrobacterium vitis (strain S4)) protein is Phosphoglucosamine mutase.